Reading from the N-terminus, the 662-residue chain is ATP-dependent RNA helicase DDX3X (662 aa).

S2 is subject to N-acetylserine. A required for TBK1 and IKBKE-dependent IFNB1 activation region spans residues 2 to 139; it reads SHVAVENALG…KSDEDDWSKP (138 aa). Residues 12–21 carry the Nuclear export signal motif; the sequence is LDQQFAGLDL. The tract at residues 19 to 144 is disordered; it reads LDLNSSDNQS…DWSKPLPPSE (126 aa). Residues 21 to 34 show a composition bias toward polar residues; it reads LNSSDNQSGGSTAS. The interval 38–44 is interaction with EIF4E; it reads YIPPHLR. Basic and acidic residues predominate over residues 44–68; sequence RNREATKGFYDKDSSGWSSSKDKDA. K55 bears the N6-acetyllysine mark. Low complexity predominate over residues 70-89; that stretch reads SSFGSRSDSRGKSSFFSDRG. The segment at 81-90 is interaction with VACV protein K7; sequence KSSFFSDRGS. Phosphoserine is present on residues S82, S86, and S90. The segment at 88-123 is involved in binding to RNA G-quadruplex; the sequence is RGSGSRGRFDDRGRSDYDGIGSRGDRSGFGKFERGG. Basic and acidic residues predominate over residues 94–130; the sequence is GRFDDRGRSDYDGIGSRGDRSGFGKFERGGNSRWCDK. Residues 100–110 are interaction with IKBKE; the sequence is GRSDYDGIGSR. The segment at 100–662 is interaction with GSK3B; it reads GRSDYDGIGS…NSQGVDWWGN (563 aa). The residue at position 101 (R101) is an Omega-N-methylarginine. S102 is subject to Phosphoserine; by IKKE. Phosphotyrosine is present on Y104. Omega-N-methylarginine is present on R110. The residue at position 118 (K118) is an N6-acetyllysine. S131 is modified (phosphoserine). The interaction with CHUK stretch occupies residues 139–172; it reads PLPPSERLEQELFSGGNTGINFEKYDDIPVEATG. The Q motif motif lies at 180 to 208; that stretch reads ESFSDVEMGEIIMGNIELTRYTRPTPVQK. S181 bears the Phosphoserine; by TBK1; in vitro mark. S183 is subject to Phosphoserine; by TBK1. ATP is bound at residue 200 to 207; it reads YTRPTPVQ. Positions 211 to 403 constitute a Helicase ATP-binding domain; the sequence is IPIIKEKRDL…RDFLDEYIFL (193 aa). K215 participates in a covalent cross-link: Glycyl lysine isopeptide (Lys-Gly) (interchain with G-Cter in SUMO2). 224–231 contributes to the ATP binding site; that stretch reads AQTGSGKT. A Phosphoserine; by TBK1; in vitro modification is found at S240. Positions 250–259 are involved in stimulation of ATPase activity by DNA and RNA, nucleic acid binding and unwinding and HIV-1 replication; sequence ALRAMKENGR. Phosphoserine; by TBK1; in vitro is present on S269. Positions 347 to 350 match the DEAD box motif; it reads DEAD. The interaction with HCV core protein stretch occupies residues 409 to 662; it reads GSTSENITQK…NSQGVDWWGN (254 aa). The 162-residue stretch at 414–575 folds into the Helicase C-terminal domain; it reads NITQKVVWVE…EVPSWLENMA (162 aa). S429 is subject to Phosphoserine; by CSNK1E and TBK1; in vitro. Position 438 is a phosphothreonine; by TBK1; in vitro (T438). S442 and S456 each carry phosphoserine; by TBK1; in vitro. Residue T469 is modified to Phosphothreonine; by CSNK1E; in vitro. Residue S470 is modified to Phosphoserine; by CSNK1E; in vitro. Residue S520 is modified to Phosphoserine; by TBK1; in vitro. Residues 536–661 are interaction with NXF1; that stretch reads GNLGLATSFF…YNSQGVDWWG (126 aa). T542 is subject to Phosphothreonine; by TBK1; in vitro. S543 carries the post-translational modification Phosphoserine; by CSNK1E and TBK1; in vitro. R592 carries the omega-N-methylarginine modification. Phosphoserine is present on residues S594, S605, and S612. The tract at residues 601-634 is disordered; the sequence is DYRQSSGASSSSFSSSRASSSRSGGGGHGSSRGF. Positions 604–622 are enriched in low complexity; it reads QSSGASSSSFSSSRASSSR. R617 and R632 each carry omega-N-methylarginine. The span at 623 to 634 shows a compositional bias: gly residues; the sequence is SGGGGHGSSRGF.

The protein belongs to the DEAD box helicase family. DDX3/DED1 subfamily. As to quaternary structure, homodimer; can bind RNA as a monomer and as a dimer/oligomer. Interacts with TDRD3. Interacts (when phosphorylated at Ser-102) with IRF3; the interaction facilitates the phosphorylation and activation of IRF3 by IKBKE. Directly interacts with XPO1/CRM1. The interaction with XPO1/CMR1 is dependent on the DDX3X nuclear export signal motif and XPO1 interaction with GTPase RAN in its active GTP-bound form. Weakly interacts with TBKBP1/SINTBAD. Directly interacts with TRAF3; this interaction stimulates TRAF3 'Lys-63' ubiquitination. Interacts with CSNK1E in a Wnt-dependent manner; this interaction greatly enhances CSNK1E affinity for ATP, stimulates its kinase activity and promotes CSNK1E-mediated DVL2 phosphorylation. In the presence of RNA, the interaction is decreased. Also interacts with CSNK1D and stimulates its kinase activity. Interacts with TRPV4; this interaction is decreased when the TRPV4 channel is activated, leading to DDX3X relocalization to the nucleus. Interacts with MAP3K14/NIK. Directly interacts with CHUK/IKKA after physiological activation of the TLR7 and TLR8 pathways; this interaction enhances CHUK autophosphorylation. May associate with EIF4F complex, composed of at least EIF4A, EIF4E and EIF4G1/EIF4G3. Directly interacts with EIF4E in an RNA-independent manner; this interaction enhances EIF4E cap-binding ability. Directly interacts with EIF4G1 in an RNA-independent manner. DDX3X competes with EIF4G1 for interaction with EIF4E. Interacts with EIF4A1 and EIF2S1 in an RNA-independent manner. Associates with the eukaryotic translation initiation factor 3 (eIF-3) complex, including with EIF3B and EIF3C subunits. Directly interacts with IKBKE/IKKE; this interaction stimulates IKBKE activating autophosphorylation and is induced upon viral infection. Interacts with TBK1. Interacts with SP1; this interaction potentiates SP1-induced CDKN1A/WAF1/CIP1 transcription. Interacts with GSK3A and GSK3B. Interacts with several death receptors, inclusing FAS, TNFRSF10A and TNFRSF10B. Recruited to TNFRSF10B in the absence of receptor stimulation. When TNFRSF10B is stimulated, further recruited to the receptor and cleaved by caspases. A large proteolytic fragment remains associated with TNFRSF10B. Interacts (via C-terminus) with NXF1/TAP; this interaction may be partly involved in DDX3X nuclear export and in NXF1 localization to stress granules. Identified in an mRNP complex, composed of at least DHX9, DDX3X, ELAVL1, HNRNPU, IGF2BP1/2, ILF3, PABPC1, PCBP2, PTBP2, STAU1, STAU2, SYNCRIP and YBX1. The interaction with IGF2BP1/2 is RNA-dependent. Directly interacts with PABPC1/PABP1 in an RNA-independent manner. This interaction increases in stressed cells and decreases during cell recovery. Interacts (via C-terminus) with MAVS/IPS-1; this interaction occurs rapidly, but transiently after Sendai virus infection. The interaction potentiates MAVS-mediated IFNB induction. Interacts with ERCC6/CBS. Interacts with DHX33 in an RNA-independent manner. Interacts with DDX5 in the cytoplasm; this interaction may be more efficient when both proteins are unphosphorylated. Interacts with RIGI/RIG-1. Interacts with IFIH1/MDA5. Interacts with NCAPH; this interaction may be important for the NCAPH localization at condensing chromosomes during mitosis. Interacts with NLRP3 (via NACHT domain) under inflammasome-activating conditions. Interacts with CAPRIN1. Interacts with HNF4A and NR0B2/SHP in an RNA-independent manner; this interaction disrupts the interaction between HNF4 and NR0B2 that forms inactive heterodimers and enhances the formation of active HNF4 homodimers. Interacts with CREBBP/CBP. Interacts with EP300/p300. Interacts with gamma-tubulin. Interacts with phosphorylated TP53. Directly interacts with RELA/p65; this interaction may trap RELA in the cytoplasm, impairing nuclear relocalization upon TNF activating signals. (Microbial infection) Interacts with hepatitis B virus (HBV) polymerase in the cytoplasm; this interaction may inhibit DDX3X interaction with the IKBKE/TBK1 complex, and hence impair IKBKE/TBK1-mediated increase in IFNB production. In terms of assembly, (Microbial infection) Directly interacts with hepatitis C virus (HCV) core protein in the cytoplasm. As to quaternary structure, (Microbial infection) Interacts with vaccinia virus (VACV) protein K7. (Microbial infection) Interacts with HIV-1 protein Rev. In terms of assembly, (Microbial infection) Interacts with Venezuelan equine encephalitis virus non-structural protein 3. Post-translationally, phosphorylated by TBK1; the phosphorylation is required for the synergistic induction of IFNB mediated by TBK1 and DDX3X. Phosphorylated by IKBKE at Ser-102 after ssRNA viral infection; enhances the induction of INFB promoter by IRF3. The cytoplasmic form is highly phosphorylated in the G1/S phase of the cell cycle and much less at G2/M. Phosphorylation by CSNK1E may inhibit RNA-stimulated ATPase activity. Upon stimulation of death receptors, including TNFRSF10B, recruited to receptors and cleaved by caspases. Proteolytic fragments remain associated with the receptors. This cleavage presumably inactivates DDX3X anti-apoptotic function. In terms of processing, ubiquitinated by RNF39 via 'Lys-48'-linked ubiquitination; leading to proteasomal degradation. Widely expressed. In testis, expressed in spermatids. Expressed in epidermis and liver (at protein level).

It localises to the cell membrane. It is found in the nucleus. The protein resides in the cytoplasm. Its subcellular location is the stress granule. The protein localises to the inflammasome. It localises to the cell projection. It is found in the lamellipodium. The protein resides in the cytoskeleton. Its subcellular location is the microtubule organizing center. The protein localises to the centrosome. It catalyses the reaction ATP + H2O = ADP + phosphate + H(+). In terms of biological role, multifunctional ATP-dependent RNA helicase. The ATPase activity can be stimulated by various ribo-and deoxynucleic acids indicative for a relaxed substrate specificity. In vitro can unwind partially double-stranded DNA with a preference for 5'-single-stranded DNA overhangs. Binds RNA G-quadruplex (rG4s) structures, including those located in the 5'-UTR of NRAS mRNA. Involved in many cellular processes, which do not necessarily require its ATPase/helicase catalytic activities. Involved in transcription regulation. Positively regulates CDKN1A/WAF1/CIP1 transcription in an SP1-dependent manner, hence inhibits cell growth. This function requires its ATPase, but not helicase activity. CDKN1A up-regulation may be cell-type specific. Binds CDH1/E-cadherin promoter and represses its transcription. Potentiates HNF4A-mediated MTTP transcriptional activation; this function requires ATPase, but not helicase activity. Facilitates HNF4A acetylation, possibly catalyzed by CREBBP/EP300, thereby increasing the DNA-binding affinity of HNF4 to its response element. In addition, disrupts the interaction between HNF4 and SHP that forms inactive heterodimers and enhances the formation of active HNF4 homodimers. By promoting HNF4A-induced MTTP expression, may play a role in lipid homeostasis. May positively regulate TP53 transcription. Associates with mRNPs, predominantly with spliced mRNAs carrying an exon junction complex (EJC). Involved in the regulation of translation initiation. Not involved in the general process of translation, but promotes efficient translation of selected complex mRNAs, containing highly structured 5'-untranslated regions (UTR). This function depends on helicase activity. Might facilitate translation by resolving secondary structures of 5'-UTRs during ribosome scanning. Alternatively, may act prior to 43S ribosomal scanning and promote 43S pre-initiation complex entry to mRNAs exhibiting specific RNA motifs, by performing local remodeling of transcript structures located close to the cap moiety. Independently of its ATPase activity, promotes the assembly of functional 80S ribosomes and disassembles from ribosomes prior to the translation elongation process. Positively regulates the translation of cyclin E1/CCNE1 mRNA and consequently promotes G1/S-phase transition during the cell cycle. May activate TP53 translation. Required for endoplasmic reticulum stress-induced ATF4 mRNA translation. Independently of its ATPase/helicase activity, enhances IRES-mediated translation; this activity requires interaction with EIF4E. Independently of its ATPase/helicase activity, has also been shown specifically repress cap-dependent translation, possibly by acting on translation initiation factor EIF4E. Involved in innate immunity, acting as a viral RNA sensor. Binds viral RNAs and promotes the production of type I interferon (IFN-alpha and IFN-beta). Potentiate MAVS/RIGI-mediated induction of IFNB in early stages of infection. Enhances IFNB1 expression via IRF3/IRF7 pathway and participates in NFKB activation in the presence of MAVS and TBK1. Involved in TBK1 and IKBKE-dependent IRF3 activation leading to IFNB induction, acts as a scaffolding adapter that links IKBKE and IRF3 and coordinates their activation. Involved in the TLR7/TLR8 signaling pathway leading to type I interferon induction, including IFNA4 production. In this context, acts as an upstream regulator of IRF7 activation by MAP3K14/NIK and CHUK/IKKA. Stimulates CHUK autophosphorylation and activation following physiological activation of the TLR7 and TLR8 pathways, leading to MAP3K14/CHUK-mediated activatory phosphorylation of IRF7. Also stimulates MAP3K14/CHUK-dependent NF-kappa-B signaling. Negatively regulates TNF-induced IL6 and IL8 expression, via the NF-kappa-B pathway. May act by interacting with RELA/p65 and trapping it in the cytoplasm. May also bind IFNB promoter; the function is independent of IRF3. Involved in both stress and inflammatory responses. Independently of its ATPase/helicase activity, required for efficient stress granule assembly through its interaction with EIF4E, hence promotes survival in stressed cells. Independently of its helicase activity, regulates NLRP3 inflammasome assembly through interaction with NLRP3 and hence promotes cell death by pyroptosis during inflammation. This function is independent of helicase activity. Therefore DDX3X availability may be used to interpret stress signals and choose between pro-survival stress granules and pyroptotic NLRP3 inflammasomes and serve as a live-or-die checkpoint in stressed cells. In association with GSK3A/B, negatively regulates extrinsic apoptotic signaling pathway via death domain receptors, including TNFRSF10B, slowing down the rate of CASP3 activation following death receptor stimulation. Cleavage by caspases may inactivate DDX3X and relieve the inhibition. Independently of its ATPase/helicase activity, allosteric activator of CSNK1E. Stimulates CSNK1E-mediated phosphorylation of DVL2, thereby involved in the positive regulation of Wnt/beta-catenin signaling pathway. Also activates CSNK1A1 and CSNK1D in vitro, but it is uncertain if these targets are physiologically relevant. ATPase and casein kinase-activating functions are mutually exclusive. May be involved in mitotic chromosome segregation. (Microbial infection) Facilitates hepatitis C virus (HCV) replication. During infection, HCV core protein inhibits the interaction between MAVS and DDX3X and therefore impairs MAVS-dependent INFB induction and might recruit DDX3X to HCV replication complex. Its function is as follows. (Microbial infection) Facilitates HIV-1 replication. Acts as a cofactor for XPO1-mediated nuclear export of HIV-1 Rev RNAs. This function is strongly stimulated in the presence of TBK1 and requires DDX3X ATPase activity. Functionally, (Microbial infection) Facilitates Zika virus (ZIKV) replication. In terms of biological role, (Microbial infection) Facilitates Dengue virus (DENV) replication. (Microbial infection) Facilitates Venezuelan equine encephalitis virus (VEEV) replication. The polypeptide is ATP-dependent RNA helicase DDX3X (DDX3X) (Homo sapiens (Human)).